The following is a 303-amino-acid chain: Coenzyme PQQ synthesis protein B (303 aa).

Belongs to the PqqB family.

The protein operates within cofactor biosynthesis; pyrroloquinoline quinone biosynthesis. May be involved in the transport of PQQ or its precursor to the periplasm. The sequence is that of Coenzyme PQQ synthesis protein B from Pseudomonas savastanoi pv. phaseolicola (strain 1448A / Race 6) (Pseudomonas syringae pv. phaseolicola (strain 1448A / Race 6)).